The sequence spans 105 residues: UPF0145 protein VP1283 (105 aa).

Belongs to the UPF0145 family.

This chain is UPF0145 protein VP1283, found in Vibrio parahaemolyticus serotype O3:K6 (strain RIMD 2210633).